A 169-amino-acid chain; its full sequence is Large ribosomal subunit protein uL10 (169 aa).

It belongs to the universal ribosomal protein uL10 family. As to quaternary structure, part of the 50S ribosomal subunit.

This Deinococcus radiodurans (strain ATCC 13939 / DSM 20539 / JCM 16871 / CCUG 27074 / LMG 4051 / NBRC 15346 / NCIMB 9279 / VKM B-1422 / R1) protein is Large ribosomal subunit protein uL10 (rplJ).